The following is a 342-amino-acid chain: S-adenosylmethionine:tRNA ribosyltransferase-isomerase (342 aa).

It belongs to the QueA family. As to quaternary structure, monomer.

Its subcellular location is the cytoplasm. The catalysed reaction is 7-aminomethyl-7-carbaguanosine(34) in tRNA + S-adenosyl-L-methionine = epoxyqueuosine(34) in tRNA + adenine + L-methionine + 2 H(+). It participates in tRNA modification; tRNA-queuosine biosynthesis. In terms of biological role, transfers and isomerizes the ribose moiety from AdoMet to the 7-aminomethyl group of 7-deazaguanine (preQ1-tRNA) to give epoxyqueuosine (oQ-tRNA). The polypeptide is S-adenosylmethionine:tRNA ribosyltransferase-isomerase (Streptococcus agalactiae serotype V (strain ATCC BAA-611 / 2603 V/R)).